Reading from the N-terminus, the 969-residue chain is Protein translocase subunit SecA (969 aa).

ATP is bound by residues Gln99, 117-121 (GEGKT), and Asp631.

This sequence belongs to the SecA family. In terms of assembly, monomer and homodimer. Part of the essential Sec protein translocation apparatus which comprises SecA, SecYEG and auxiliary proteins SecDF. Other proteins may also be involved.

The protein resides in the cell inner membrane. Its subcellular location is the cytoplasm. The enzyme catalyses ATP + H2O + cellular proteinSide 1 = ADP + phosphate + cellular proteinSide 2.. In terms of biological role, part of the Sec protein translocase complex. Interacts with the SecYEG preprotein conducting channel. Has a central role in coupling the hydrolysis of ATP to the transfer of proteins into and across the cell membrane, serving as an ATP-driven molecular motor driving the stepwise translocation of polypeptide chains across the membrane. In Chlamydia felis (strain Fe/C-56) (Chlamydophila felis), this protein is Protein translocase subunit SecA.